The sequence spans 252 residues: Triosephosphate isomerase (252 aa).

9–11 contributes to the substrate binding site; that stretch reads NWK. Histidine 96 (electrophile) is an active-site residue. Glutamate 166 functions as the Proton acceptor in the catalytic mechanism. Residues glycine 172, serine 212, and 233–234 each bind substrate; that span reads GG.

This sequence belongs to the triosephosphate isomerase family. In terms of assembly, homodimer.

Its subcellular location is the cytoplasm. The enzyme catalyses D-glyceraldehyde 3-phosphate = dihydroxyacetone phosphate. Its pathway is carbohydrate biosynthesis; gluconeogenesis. It functions in the pathway carbohydrate degradation; glycolysis; D-glyceraldehyde 3-phosphate from glycerone phosphate: step 1/1. Functionally, involved in the gluconeogenesis. Catalyzes stereospecifically the conversion of dihydroxyacetone phosphate (DHAP) to D-glyceraldehyde-3-phosphate (G3P). This Prosthecochloris aestuarii (strain DSM 271 / SK 413) protein is Triosephosphate isomerase.